The primary structure comprises 180 residues: Large ribosomal subunit protein uL5 (180 aa).

It belongs to the universal ribosomal protein uL5 family. Part of the 50S ribosomal subunit; part of the 5S rRNA/L5/L18/L25 subcomplex. Contacts the 5S rRNA and the P site tRNA. Forms a bridge to the 30S subunit in the 70S ribosome.

This is one of the proteins that bind and probably mediate the attachment of the 5S RNA into the large ribosomal subunit, where it forms part of the central protuberance. In the 70S ribosome it contacts protein S13 of the 30S subunit (bridge B1b), connecting the 2 subunits; this bridge is implicated in subunit movement. Contacts the P site tRNA; the 5S rRNA and some of its associated proteins might help stabilize positioning of ribosome-bound tRNAs. This is Large ribosomal subunit protein uL5 from Cupriavidus necator (strain ATCC 17699 / DSM 428 / KCTC 22496 / NCIMB 10442 / H16 / Stanier 337) (Ralstonia eutropha).